We begin with the raw amino-acid sequence, 353 residues long: Melanin-concentrating hormone receptor 1 (353 aa).

Positions 1-28 (MDLEASLLPTGPNASNTSDGPDNLTSAG) are disordered. The Extracellular portion of the chain corresponds to 1 to 45 (MDLEASLLPTGPNASNTSDGPDNLTSAGPPPRTGSISYVNIIMPS). Residues 12–26 (PNASNTSDGPDNLTS) are compositionally biased toward polar residues. Residues N13, N16, and N23 are each glycosylated (N-linked (GlcNAc...) asparagine). A helical transmembrane segment spans residues 46-66 (VFGTICLLGIIGNSMVIFAVV). Over 67–79 (KKSKLHWFSNVPD) the chain is Cytoplasmic. A helical transmembrane segment spans residues 80–100 (IFIINLSVVDLLFLLGMPFMI). The Extracellular segment spans residues 101 to 116 (HQLMGNGVWHFGETMC). A disulfide bond links C116 and C194. A helical transmembrane segment spans residues 117–139 (TLITAMDANSQFTSTYILTAMAI). At 140–161 (DRYLATVHPISSTRFRKPSVAT) the chain is on the cytoplasmic side. Residues 162–182 (LVICLLWALSIISITPVWLYA) form a helical membrane-spanning segment. The Extracellular segment spans residues 183–204 (RLIPFPGGTVGCGIRLPNPDTD). The chain crosses the membrane as a helical span at residues 205–225 (LYWFTLYQFFLAFALPFVVIT). At 226-256 (AAYVRILQRMTSSVAPASQRSIRLRTKRVTR) the chain is on the cytoplasmic side. Residues 257 to 277 (TAIAICLVFFVCWAPYYVLQL) form a helical membrane-spanning segment. Residues 278-294 (TQLSISRPTLTFVYLYN) are Extracellular-facing. Residues 295–315 (AAISLGYANSCLNPFVYIVLC) traverse the membrane as a helical segment. The Cytoplasmic segment spans residues 316–353 (ETFRKRLVLSVKPAAQGQLRAVSNAQTAEEERTESKGT).

This sequence belongs to the G-protein coupled receptor 1 family. In terms of assembly, interacts with NCDN.

Its subcellular location is the cell membrane. Functionally, receptor for melanin-concentrating hormone, coupled to both G proteins that inhibit adenylyl cyclase and G proteins that activate phosphoinositide hydrolysis. The polypeptide is Melanin-concentrating hormone receptor 1 (Sus scrofa (Pig)).